The following is a 357-amino-acid chain: N-acetyl-gamma-glutamyl-phosphate reductase (357 aa).

The active site involves cysteine 151.

Belongs to the NAGSA dehydrogenase family. Type 1 subfamily.

It localises to the cytoplasm. It carries out the reaction N-acetyl-L-glutamate 5-semialdehyde + phosphate + NADP(+) = N-acetyl-L-glutamyl 5-phosphate + NADPH + H(+). The protein operates within amino-acid biosynthesis; L-arginine biosynthesis; N(2)-acetyl-L-ornithine from L-glutamate: step 3/4. Functionally, catalyzes the NADPH-dependent reduction of N-acetyl-5-glutamyl phosphate to yield N-acetyl-L-glutamate 5-semialdehyde. In Corynebacterium kroppenstedtii (strain DSM 44385 / JCM 11950 / CIP 105744 / CCUG 35717), this protein is N-acetyl-gamma-glutamyl-phosphate reductase.